Consider the following 120-residue polypeptide: Adenosylhomocysteinase (120 aa).

N34 is a binding site for NAD(+).

It belongs to the adenosylhomocysteinase family. It depends on NAD(+) as a cofactor.

The protein localises to the cytoplasm. It catalyses the reaction S-adenosyl-L-homocysteine + H2O = L-homocysteine + adenosine. It functions in the pathway amino-acid biosynthesis; L-homocysteine biosynthesis; L-homocysteine from S-adenosyl-L-homocysteine: step 1/1. May play a key role in the regulation of the intracellular concentration of adenosylhomocysteine. The protein is Adenosylhomocysteinase (ahcY) of Streptomyces fradiae (Streptomyces roseoflavus).